The primary structure comprises 207 residues: rRNA N(6)-adenosine-methyltransferase METTL5 (207 aa).

S-adenosyl-L-methionine contacts are provided by residues glutamine 25, threonine 28, glycine 56, cysteine 59, valine 61, aspartate 78, and 105 to 106; that span reads DV.

The protein belongs to the methyltransferase superfamily. PrmA family.

The protein localises to the nucleus. It localises to the presynapse. Its subcellular location is the postsynapse. The catalysed reaction is adenosine(1832) in 18S rRNA + S-adenosyl-L-methionine = N(6)-methyladenosine(1832) in 18S rRNA + S-adenosyl-L-homocysteine + H(+). With respect to regulation, rRNA N6-adenosine-methyltransferase activity is inhibited by zinc. Its function is as follows. Catalytic subunit of a heterodimer with TRMT112, which specifically methylates the 6th position of adenine in position 1832 of 18S rRNA. N6-methylation of adenine(1832) in 18S rRNA resides in the decoding center of 18S rRNA and is required for translation and embryonic stem cells (ESCs) pluripotency and differentiation. This chain is rRNA N(6)-adenosine-methyltransferase METTL5, found in Danio rerio (Zebrafish).